The following is a 166-amino-acid chain: CDP-archaeol synthase (166 aa).

4 helical membrane passes run 39–59, 61–81, 104–124, and 127–147; these read IRGF…QMYA, ISGL…LLAI, EWFL…TLLF, and IWML…LTPL.

The protein belongs to the CDP-archaeol synthase family. Mg(2+) is required as a cofactor.

The protein resides in the cell membrane. The enzyme catalyses 2,3-bis-O-(geranylgeranyl)-sn-glycerol 1-phosphate + CTP + H(+) = CDP-2,3-bis-O-(geranylgeranyl)-sn-glycerol + diphosphate. It functions in the pathway membrane lipid metabolism; glycerophospholipid metabolism. In terms of biological role, catalyzes the formation of CDP-2,3-bis-(O-geranylgeranyl)-sn-glycerol (CDP-archaeol) from 2,3-bis-(O-geranylgeranyl)-sn-glycerol 1-phosphate (DGGGP) and CTP. This reaction is the third ether-bond-formation step in the biosynthesis of archaeal membrane lipids. This Methanospirillum hungatei JF-1 (strain ATCC 27890 / DSM 864 / NBRC 100397 / JF-1) protein is CDP-archaeol synthase.